The following is a 313-amino-acid chain: Postacrosomal sheath WW domain-binding protein (313 aa).

The region spanning 8 to 87 is the GRAM domain; it reads TESRRGALIP…GLMSDCTIEQ (80 aa). 12 repeat units span residues 179–185, 193–199, 207–213, 214–220, 221–227, 228–234, 235–241, 242–248, 249–255, 256–262, 263–269, and 270–276. The interval 179–276 is 12 X 7 AA tandem repeat of Y-G-X-P-P-X-G; the sequence is YGPPPPGYTV…PAGYGAPPAG (98 aa). The short motif at 183–186 is the PPxY motif 1 element; the sequence is PPGY. The segment covering 254–264 has biased composition (gly residues); it reads GGYGAPPGGYG. The tract at residues 254–313 is disordered; it reads GGYGAPPGGYGAPPAGYGAPPAGNEALPPAYEAPSAGNTAASHRSMTAQQETSLPTTSSS. Residues 265-276 show a composition bias toward low complexity; sequence APPAGYGAPPAG. A PPxY motif 2 motif is present at residues 281–284; it reads PPAY. Positions 289–313 are enriched in polar residues; sequence AGNTAASHRSMTAQQETSLPTTSSS.

In terms of tissue distribution, expressed in testis.

In terms of biological role, may play a role in meiotic resumption and pronuclear formation, mediated by a WW domain-signaling pathway during fertilization. The chain is Postacrosomal sheath WW domain-binding protein (WBP2NL) from Bos taurus (Bovine).